The sequence spans 464 residues: Chromosomal replication initiator protein DnaA (464 aa).

The segment at 1–90 (MNNDNTEVLE…KYWQDEDQSI (90 aa)) is domain I, interacts with DnaA modulators. Residues 90 to 126 (ICSVDICVVSNQDPNLLVDIKDRVDRGIKGNCDNVSS) form a domain II region. Residues 127–345 (PLDPRFTFDN…GALNKVVAHS (219 aa)) form a domain III, AAA+ region region. ATP contacts are provided by Gly-173, Gly-175, Lys-176, and Thr-177. The tract at residues 346 to 464 (SLVGCSITLD…DINLLNRMLR (119 aa)) is domain IV, binds dsDNA.

The protein belongs to the DnaA family. Oligomerizes as a right-handed, spiral filament on DNA at oriC.

It is found in the cytoplasm. In terms of biological role, plays an essential role in the initiation and regulation of chromosomal replication. ATP-DnaA binds to the origin of replication (oriC) to initiate formation of the DNA replication initiation complex once per cell cycle. Binds the DnaA box (a 9 base pair repeat at the origin) and separates the double-stranded (ds)DNA. Forms a right-handed helical filament on oriC DNA; dsDNA binds to the exterior of the filament while single-stranded (ss)DNA is stabiized in the filament's interior. The ATP-DnaA-oriC complex binds and stabilizes one strand of the AT-rich DNA unwinding element (DUE), permitting loading of DNA polymerase. After initiation quickly degrades to an ADP-DnaA complex that is not apt for DNA replication. Binds acidic phospholipids. The chain is Chromosomal replication initiator protein DnaA from Ehrlichia ruminantium (strain Gardel).